A 536-amino-acid polypeptide reads, in one-letter code: Chromosomal replication initiator protein DnaA (536 aa).

Residues 1 to 72 are domain I, interacts with DnaA modulators; it reads MNDFWQHCSA…DLARDFWNAP (72 aa). The segment at 72–199 is domain II; it reads PIEVQFVLDP…EAADSMYERS (128 aa). The interval 97–121 is disordered; the sequence is RAPLPAANPAPVTAGPAPSGAADAN. The segment covering 105–121 has biased composition (low complexity); that stretch reads PAPVTAGPAPSGAADAN. A domain III, AAA+ region region spans residues 200 to 416; that stretch reads KLNPVLTFDN…GALRKILAYS (217 aa). Positions 244, 246, 247, and 248 each coordinate ATP. The tract at residues 417–536 is domain IV, binds dsDNA; that stretch reads KFHGREITIE…LHVLEQTLKG (120 aa).

The protein belongs to the DnaA family. As to quaternary structure, oligomerizes as a right-handed, spiral filament on DNA at oriC.

It localises to the cytoplasm. Functionally, plays an essential role in the initiation and regulation of chromosomal replication. ATP-DnaA binds to the origin of replication (oriC) to initiate formation of the DNA replication initiation complex once per cell cycle. Binds the DnaA box (a 9 base pair repeat at the origin) and separates the double-stranded (ds)DNA. Forms a right-handed helical filament on oriC DNA; dsDNA binds to the exterior of the filament while single-stranded (ss)DNA is stabiized in the filament's interior. The ATP-DnaA-oriC complex binds and stabilizes one strand of the AT-rich DNA unwinding element (DUE), permitting loading of DNA polymerase. After initiation quickly degrades to an ADP-DnaA complex that is not apt for DNA replication. Binds acidic phospholipids. This Burkholderia thailandensis (strain ATCC 700388 / DSM 13276 / CCUG 48851 / CIP 106301 / E264) protein is Chromosomal replication initiator protein DnaA.